Here is a 1405-residue protein sequence, read N- to C-terminus: DNA-directed RNA polymerase subunit beta' (1405 aa).

Zn(2+) contacts are provided by Cys70, Cys72, Cys85, and Cys88. Asp460, Asp462, and Asp464 together coordinate Mg(2+). 4 residues coordinate Zn(2+): Cys815, Cys889, Cys896, and Cys899. A disordered region spans residues 1363–1388 (LAHHAERRRRREDPESTANPSAFDVE).

This sequence belongs to the RNA polymerase beta' chain family. The RNAP catalytic core consists of 2 alpha, 1 beta, 1 beta' and 1 omega subunit. When a sigma factor is associated with the core the holoenzyme is formed, which can initiate transcription. Requires Mg(2+) as cofactor. Zn(2+) serves as cofactor.

It catalyses the reaction RNA(n) + a ribonucleoside 5'-triphosphate = RNA(n+1) + diphosphate. Functionally, DNA-dependent RNA polymerase catalyzes the transcription of DNA into RNA using the four ribonucleoside triphosphates as substrates. This is DNA-directed RNA polymerase subunit beta' from Chromohalobacter salexigens (strain ATCC BAA-138 / DSM 3043 / CIP 106854 / NCIMB 13768 / 1H11).